A 120-amino-acid chain; its full sequence is MLQQESRIRVADNSGAKEVLLIRVLGGKKYAYIGDTIIVSIKEAIAGSSVKKGQLYKAVVVRTKKKIRRKDGSYIRFDDNACVLLTNTGEMKGTRILGPVSRELRDKEYTKIVSLATEVL.

It belongs to the universal ribosomal protein uL14 family. Part of the 50S ribosomal subunit. Forms a cluster with proteins L3 and L19. In the 70S ribosome, L14 and L19 interact and together make contacts with the 16S rRNA in bridges B5 and B8.

Its function is as follows. Binds to 23S rRNA. Forms part of two intersubunit bridges in the 70S ribosome. The protein is Large ribosomal subunit protein uL14 of Karelsulcia muelleri (strain GWSS) (Sulcia muelleri).